A 451-amino-acid chain; its full sequence is Tetraspanin-14 (451 aa).

Over 1–56 (MPHRAPRRFMKTAPGACDWEQCLLMGSGEPTRARAVVSSSHKQRKPRQEISACLKW) the chain is Cytoplasmic. The short motif at 20 to 24 (EQCLL) is the Basolateral membrane targeting element. The helical transmembrane segment at 57 to 77 (LVFLLNSIVFLVGVGILALGV) threads the bilayer. At 78–96 (YLFIKDFREVKLVDIILNP) the chain is on the extracellular side. The helical transmembrane segment at 97 to 117 (AILISIFGFSICVVSFFGFMG) threads the bilayer. The Cytoplasmic segment spans residues 118–130 (ALRDNIFLLKCFA). Residues 131-151 (ACVFLSYILVVAVTLVFFTLF) traverse the membrane as a helical segment. Residues 152–285 (YTDTTEGLSA…QPLRTLFESH (134 aa)) lie on the Extracellular side of the membrane. N-linked (GlcNAc...) asparagine glycosylation is found at Asn205 and Asn211. Residues 286–306 (AVHVGAFVALLIVPVCISVCL) traverse the membrane as a helical segment. Residues 307–451 (TNILAKQVDH…TDLVPQKSKS (145 aa)) lie on the Cytoplasmic side of the membrane. Residues 328–451 (NDRRRKRDHN…TDLVPQKSKS (124 aa)) are disordered. Pro residues predominate over residues 366–376 (PDIPPPLPPIE). Over residues 410 to 434 (ATTTRTPPAAAGPAPTPQATTTNRT) the composition is skewed to low complexity. Residues 435-444 (HQWVLQQTDL) are compositionally biased toward polar residues.

Belongs to the tetraspanin (TM4SF) family. Expressed in the germline, particularly in sperm cells. In terms of tissue distribution, expressed in the germline (particularly in sperm cells), anterior sensory cilia, hypodermis and vulva (at protein level). As to expression, expressed in the pharynx, hypodermis and vulva (at protein level).

It localises to the cell membrane. Its subcellular location is the cytoplasmic vesicle membrane. The protein resides in the endosome membrane. The protein localises to the early endosome membrane. It is found in the late endosome membrane. It localises to the recycling endosome membrane. Its subcellular location is the apical cell membrane. The protein resides in the basolateral cell membrane. Functionally, functions redundantly with tsp-12 to regulate cell surface levels of the BMP type II receptor daf-4 (but not BMP type I receptor sma-6), probably by regulating endosomal sorting and recycling of receptors, preventing their targeting to degradative lysosomes. Together with tsp-12, regulates cell fate specification in the postembryonic mesodermal M lineage, body size, male development and vulva development, probably by positively modulating BMP-like Sma/Mab signaling. Together with tsp-12 involved in maintaining the structural and functional integrity of the endosomal network. Together with tsp-12, probably acts by modulating the activation of glp-1, Notch-like receptor, to regulate germline maturation. Functions redundantly with tsp-12 to regulate cell fate specification in the postembryonic mesodermal M lineage, body size, embryonic and vulva development. In terms of biological role, functions redundantly with tsp-12 to regulate cell fate specification in the postembryonic mesodermal M lineage. Likely plays a complementary role in mesodermal development with tsp-14 isoform a, but may be more critical. This is Tetraspanin-14 from Caenorhabditis elegans.